A 260-amino-acid chain; its full sequence is Thiazole synthase (260 aa).

The active-site Schiff-base intermediate with DXP is Lys-96. Residues Gly-157, 184–185, and 206–207 contribute to the 1-deoxy-D-xylulose 5-phosphate site; these read AG and NT.

Belongs to the ThiG family. As to quaternary structure, homotetramer. Forms heterodimers with either ThiH or ThiS.

The protein localises to the cytoplasm. The enzyme catalyses [ThiS sulfur-carrier protein]-C-terminal-Gly-aminoethanethioate + 2-iminoacetate + 1-deoxy-D-xylulose 5-phosphate = [ThiS sulfur-carrier protein]-C-terminal Gly-Gly + 2-[(2R,5Z)-2-carboxy-4-methylthiazol-5(2H)-ylidene]ethyl phosphate + 2 H2O + H(+). It functions in the pathway cofactor biosynthesis; thiamine diphosphate biosynthesis. Catalyzes the rearrangement of 1-deoxy-D-xylulose 5-phosphate (DXP) to produce the thiazole phosphate moiety of thiamine. Sulfur is provided by the thiocarboxylate moiety of the carrier protein ThiS. In vitro, sulfur can be provided by H(2)S. The protein is Thiazole synthase of Rhodopseudomonas palustris (strain TIE-1).